The following is a 314-amino-acid chain: NF-kappa-B inhibitor alpha (314 aa).

The disordered stretch occupies residues M1–D39. Residues G15–D39 are compositionally biased toward basic and acidic residues. K21 participates in a covalent cross-link: Glycyl lysine isopeptide (Lys-Gly) (interchain with G-Cter in SUMO); alternate. K21 is covalently cross-linked (Glycyl lysine isopeptide (Lys-Gly) (interchain with G-Cter in ubiquitin); alternate). Residue K22 forms a Glycyl lysine isopeptide (Lys-Gly) (interchain with G-Cter in ubiquitin) linkage. Residues H30–S36 carry the Destruction motif motif. A Phosphoserine; by IKKA and IKKB modification is found at S32. S36 carries the post-translational modification Phosphoserine; by IKKA, IKKB, IKKE and TBK1. Y42 is modified (phosphotyrosine; by Tyr-kinases). The Nuclear export signal motif lies at M45–L54. A Nuclear import signal motif is present at residues L110–I120. ANK repeat units lie at residues L110–L139, R143–L172, N182–A211, and N216–R245. (3S)-3-hydroxyasparagine; by HIF1AN is present on residues N210 and N244. A phosphoserine; by CK2 mark is found at S283 and S288. The residue at position 291 (T291) is a Phosphothreonine; by CK2. S293 is modified (phosphoserine; by CK2). Position 296 is a phosphothreonine (T296).

Belongs to the NF-kappa-B inhibitor family. Interacts with RELA; the interaction requires the nuclear import signal. Part of a 70-90 kDa complex at least consisting of CHUK, IKBKB, NFKBIA, RELA, ELP1 and MAP3K14. Interacts with NKIRAS1 and NKIRAS2. Interacts with RWDD3; the interaction enhances sumoylation. Interacts with PRMT2. Interacts with PRKACA in platelets; this interaction is disrupted by thrombin and collagen. Interacts with MEFV. Interacts with DDRGK1; positively regulates NFKBIA phosphorylation and degradation. Interacts with HNRNPA2B1; the interaction may be mediated by the RRM2 domain of HNRNPA2B1, and HNRNPA2B1 may interact simultaneously with FAM76B and either NFKBIA or NFKBIE to form a complex. Phosphorylated at Ser-32 and Ser-36 by IKKA/CHUK and IKKB/IKBKB; disables inhibition of NF-kappa-B DNA-binding activity. Phosphorylation at positions 32 and 36 is prerequisite to recognition by the SCF(FBXW11) and SCF(BTRC) complexes, leading to polyubiquitination and subsequent degradation. Post-translationally, polyubiquitinated at Lys-21 and/or Lys-22 following phosphorylation at Ser-32 and Ser-36. Monoubiquitinated at Lys-21 and/or Lys-22 by UBE2D3. Ubiquitin chain elongation is then performed by CDC34 in cooperation with the SCF(FBXW11) E3 ligase complex, building ubiquitin chains from the UBE2D3-primed NFKBIA-linked ubiquitin. The resulting polyubiquitination leads to protein degradation. Also ubiquitinated by the SCF(BTRC) complex following stimulus-dependent phosphorylation at Ser-32 and Ser-36. Deubiquitinated by USP38, leading to NF-kappa-B inhibition. In terms of processing, sumoylated; sumoylation requires the presence of the nuclear import signal. Sumoylation blocks ubiquitination and proteasome-mediated degradation of the protein thereby increasing the protein stability. Hydroxylated by HIF1AN.

It is found in the cytoplasm. It localises to the nucleus. Functionally, inhibits the activity of dimeric NF-kappa-B/REL complexes by trapping REL (RELA/p65 and NFKB1/p50) dimers in the cytoplasm by masking their nuclear localization signals. On cellular stimulation by immune and pro-inflammatory responses, becomes phosphorylated promoting ubiquitination and degradation, enabling the dimeric RELA to translocate to the nucleus and activate transcription. The sequence is that of NF-kappa-B inhibitor alpha (Nfkbia) from Rattus norvegicus (Rat).